Consider the following 222-residue polypeptide: MAAGSRTSLLLAFALLCLPWLQEAGAVQTVPLSRLFKEAMLQAHRAHQLAIDTYQEFISSWGMEAYITKEQKYSFLHDSQTSFCFSDSIPTSSNMEETQQKSNLELLHISLLLIESRLEPVRFLRSTFTNNLVYDTSDSDDYHLLKDLEEGIQMLMGRLEDGSHLTGQTLKQTYSKFDTNSHNHDALLKNYGLLHCFRKDMDKVETFLRMVQCRSVEGSCGF.

The signal sequence occupies residues 1-26; it reads MAAGSRTSLLLAFALLCLPWLQEAGA. His44 and Glu205 together coordinate Zn(2+). The cysteines at positions 213 and 220 are disulfide-linked.

Belongs to the somatotropin/prolactin family.

The protein localises to the secreted. May be a novel gestational hormone required to compensate for absence of other members of the GH/CS cluster during gestation. This is Chorionic somatomammotropin hormone-like 1 (CSHL1) from Homo sapiens (Human).